The following is a 227-amino-acid chain: Lectin (227 aa).

Residues 1 to 28 (MTMTSTTTKAMAMAAAVLAAAAVAATNA) form the signal peptide. Glutamine 29 carries the pyrrolidone carboxylic acid modification. 4 Chitin-binding type-1 domains span residues 29–70 (QTCG…ACCS), 71–113 (SQRC…PCRA), 114–156 (DIKC…ACCP), and 157–199 (EKRC…GCYK). Intrachain disulfides connect cysteine 31–cysteine 46, cysteine 40–cysteine 52, cysteine 45–cysteine 59, cysteine 63–cysteine 68, cysteine 74–cysteine 89, cysteine 83–cysteine 95, cysteine 88–cysteine 102, cysteine 106–cysteine 111, cysteine 117–cysteine 132, cysteine 126–cysteine 138, cysteine 131–cysteine 145, cysteine 149–cysteine 154, cysteine 160–cysteine 175, cysteine 169–cysteine 181, cysteine 174–cysteine 188, and cysteine 192–cysteine 197. Residue 38-40 (MIC) participates in substrate binding. Position 90–101 (90–101 (SQYGYCGFGSEY)) interacts with substrate. 142-143 (SE) contacts substrate. The propeptide occupies 202 to 227 (DGMAAILANNQSVSFEGIIESVAELV). Residue asparagine 211 is glycosylated (N-linked (GlcNAc...) asparagine).

Confined to root caps, several cell layers at the periphery of the coleorhiza and radicle, and in all cell layers of the coleoptile.

N-acetyl-D-glucosamine binding lectin. This chain is Lectin, found in Oryza sativa subsp. japonica (Rice).